The following is a 1180-amino-acid chain: Lon protease homolog 2, peroxisomal (1180 aa).

In terms of domain architecture, Lon N-terminal spans 19–366; it reads LPTCKLDSNL…ELINMINQLI (348 aa). Residues 416–465 form a disordered region; it reads PISNRGNIKSFNNSENGNNNKTNGSGITSRRPKSNEDGGEVYDEEDDDEE. Positions 422-444 are enriched in low complexity; that stretch reads NIKSFNNSENGNNNKTNGSGITS. Positions 452-465 are enriched in acidic residues; the sequence is DGGEVYDEEDDDEE. 667–674 contributes to the ATP binding site; the sequence is GPPGTGKT. A Lon proteolytic domain is found at 924–1163; the sequence is NSRVGIVNGL…YDVMKILWGE (240 aa). Catalysis depends on residues Ser1032 and Lys1075.

It belongs to the peptidase S16 family.

The protein resides in the peroxisome matrix. The catalysed reaction is Hydrolysis of proteins in presence of ATP.. Functionally, ATP-dependent serine protease that mediates the selective degradation of misfolded and unassembled polypeptides in the peroxisomal matrix. Necessary for type 2 peroxisome targeting signal (PTS2)-containing protein processing and facilitates peroxisome matrix protein import. This Scheffersomyces stipitis (strain ATCC 58785 / CBS 6054 / NBRC 10063 / NRRL Y-11545) (Yeast) protein is Lon protease homolog 2, peroxisomal.